Here is a 357-residue protein sequence, read N- to C-terminus: Probable leucine aminopeptidase ARB_00576 (357 aa).

The N-terminal stretch at 1–15 is a signal peptide; that stretch reads MKVLAALALSALAMA. A glycan (N-linked (GlcNAc...) asparagine) is linked at N76. Zn(2+) contacts are provided by H167 and D185. The disordered stretch occupies residues 169–188; sequence DSINGNNPQGEAPGADDNGS. Residue N186 is glycosylated (N-linked (GlcNAc...) asparagine). The Zn(2+) site is built by E224 and D251. The N-linked (GlcNAc...) asparagine glycan is linked to N269. A disulfide bond links C291 and C295. H324 contributes to the Zn(2+) binding site.

This sequence belongs to the peptidase M28 family. M28E subfamily. As to quaternary structure, monomer. Zn(2+) is required as a cofactor.

The protein resides in the secreted. Probable extracellular aminopeptidase which contributes to pathogenicity. In Arthroderma benhamiae (strain ATCC MYA-4681 / CBS 112371) (Trichophyton mentagrophytes), this protein is Probable leucine aminopeptidase ARB_00576.